We begin with the raw amino-acid sequence, 2156 residues long: Probable capsid protein 3 (2156 aa).

The interval 1319-1345 (NKSNKSNKSNESDKSSESDKSSESSNH) is disordered. Residues 1326-1345 (KSNESDKSSESDKSSESSNH) are compositionally biased toward basic and acidic residues.

This sequence belongs to the NCLDV major capsid protein family.

It is found in the virion. This chain is Probable capsid protein 3, found in Acanthamoeba polyphaga mimivirus (APMV).